The primary structure comprises 420 residues: Glutamyl-tRNA reductase (420 aa).

Residues 49–52, Ser-109, 114–116, and Gln-120 each bind substrate; these read TCNR and EPQ. The Nucleophile role is filled by Cys-50. 189–194 serves as a coordination point for NADP(+); the sequence is GAGETI.

It belongs to the glutamyl-tRNA reductase family. In terms of assembly, homodimer.

It catalyses the reaction (S)-4-amino-5-oxopentanoate + tRNA(Glu) + NADP(+) = L-glutamyl-tRNA(Glu) + NADPH + H(+). Its pathway is porphyrin-containing compound metabolism; protoporphyrin-IX biosynthesis; 5-aminolevulinate from L-glutamyl-tRNA(Glu): step 1/2. Its function is as follows. Catalyzes the NADPH-dependent reduction of glutamyl-tRNA(Glu) to glutamate 1-semialdehyde (GSA). The chain is Glutamyl-tRNA reductase from Sodalis glossinidius (strain morsitans).